A 238-amino-acid chain; its full sequence is uncharacterized protein (238 aa).

Residues 1–10 (MARGQNIRKR) are compositionally biased toward basic residues. Disordered regions lie at residues 1–26 (MARGQNIRKRTFSDMDTPSDKNIGIH) and 195–238 (LNTS…YDSF).

Belongs to the asfivirus DP238L family.

This is an uncharacterized protein from Ornithodoros (relapsing fever ticks).